The following is a 114-amino-acid chain: Large ribosomal subunit protein uL22 (114 aa).

Belongs to the universal ribosomal protein uL22 family. Part of the 50S ribosomal subunit.

Functionally, this protein binds specifically to 23S rRNA; its binding is stimulated by other ribosomal proteins, e.g. L4, L17, and L20. It is important during the early stages of 50S assembly. It makes multiple contacts with different domains of the 23S rRNA in the assembled 50S subunit and ribosome. In terms of biological role, the globular domain of the protein is located near the polypeptide exit tunnel on the outside of the subunit, while an extended beta-hairpin is found that lines the wall of the exit tunnel in the center of the 70S ribosome. The chain is Large ribosomal subunit protein uL22 from Streptococcus gordonii (strain Challis / ATCC 35105 / BCRC 15272 / CH1 / DL1 / V288).